Consider the following 125-residue polypeptide: Small ribosomal subunit protein bS6 (125 aa).

A disordered region spans residues 97-125 (TEASPMKAAKEERKPLAEVENNDFEDAEE). Basic and acidic residues predominate over residues 104–113 (AAKEERKPLA). Residues 116 to 125 (ENNDFEDAEE) are compositionally biased toward acidic residues.

Belongs to the bacterial ribosomal protein bS6 family.

Its function is as follows. Binds together with bS18 to 16S ribosomal RNA. This chain is Small ribosomal subunit protein bS6, found in Haemophilus influenzae (strain PittEE).